A 205-amino-acid chain; its full sequence is HTH-type transcriptional regulator PksA (205 aa).

The HTH tetR-type domain occupies 8-68 (EKRRKQIAEA…FAMKLVQEKV (61 aa)). Residues 31–50 (SARNIAKEAGLSLGALRHYF) constitute a DNA-binding region (H-T-H motif).

Its function is as follows. Transcriptional regulation of the polyketide synthase operon. In Bacillus subtilis (strain 168), this protein is HTH-type transcriptional regulator PksA (pksA).